Here is a 606-residue protein sequence, read N- to C-terminus: MACPF domain-containing protein At4g24290 (606 aa).

One can recognise an MACPF domain in the interval 1–332 (MALRLPASKA…PPIEELHQFL (332 aa)).

It belongs to the complement C6/C7/C8/C9 (TC 1.C.39) family.

Negatively controls the salicylic acid (SA)-mediated pathway of programmed cell death in plant immunity. This Arabidopsis thaliana (Mouse-ear cress) protein is MACPF domain-containing protein At4g24290.